A 233-amino-acid chain; its full sequence is MYSIKMRASKNGKHISGAERIVNKDEIEDVARELIKRALTHENGTPDFINIKIEEIKEDIEYIDHLPIKTIHCKNKEEAREKAREILRNEGIPDKVIDYAYEIIDKGGMRGAAILNLKGERLEPDKERGVRVKNIDTTKELKEKILKEKLGTERTVDAIAIASKVIHLGVIAELCTSDNKSYTTGYVATKRGYFRITNLKKEGESGGRVFFVKNDVNIEDLIDKLENKPFIIK.

The protein belongs to the BioW family. As to quaternary structure, homodimer. Mg(2+) serves as cofactor.

The enzyme catalyses heptanedioate + ATP + CoA = 6-carboxyhexanoyl-CoA + AMP + diphosphate. It functions in the pathway metabolic intermediate metabolism; pimeloyl-CoA biosynthesis; pimeloyl-CoA from pimelate: step 1/1. Its function is as follows. Catalyzes the transformation of pimelate into pimeloyl-CoA with concomitant hydrolysis of ATP to AMP. This is 6-carboxyhexanoate--CoA ligase from Methanocaldococcus sp. (strain FS406-22).